A 635-amino-acid polypeptide reads, in one-letter code: Interferon-induced GTP-binding protein Mx2 (635 aa).

A Dynamin-type G domain is found at 31–304 (DLALPAIAVI…LVQHIEKSMP (274 aa)). The interval 41-48 (GDQSSGKS) is G1 motif. 41 to 48 (GDQSSGKS) lines the GTP pocket. A G2 motif region spans residues 66-68 (VTR). Positions 142–145 (DLPG) are G3 motif. GTP contacts are provided by residues 142–146 (DLPGI) and 211–214 (TKPD). Residues 211 to 214 (TKPD) form a G4 motif region. The interval 243-246 (KCRG) is G5 motif. Positions 549–635 (LREMMLHLKS…MKAHNYLVEF (87 aa)) constitute a GED domain.

Belongs to the TRAFAC class dynamin-like GTPase superfamily. Dynamin/Fzo/YdjA family.

It is found in the nucleus. It localises to the cytoplasm. Its function is as follows. Does not inhibit strain RB-1 of the fish pathogen, infectious hematopoietic necrosis virus (IHNV). In Oncorhynchus mykiss (Rainbow trout), this protein is Interferon-induced GTP-binding protein Mx2.